Reading from the N-terminus, the 95-residue chain is Integration host factor subunit beta (95 aa).

This sequence belongs to the bacterial histone-like protein family. In terms of assembly, heterodimer of an alpha and a beta chain.

This protein is one of the two subunits of integration host factor, a specific DNA-binding protein that functions in genetic recombination as well as in transcriptional and translational control. This chain is Integration host factor subunit beta, found in Jannaschia sp. (strain CCS1).